The following is a 97-amino-acid chain: Large ribosomal subunit protein uL23 (97 aa).

This sequence belongs to the universal ribosomal protein uL23 family. As to quaternary structure, part of the 50S ribosomal subunit. Contacts protein L29, and trigger factor when it is bound to the ribosome.

One of the early assembly proteins it binds 23S rRNA. One of the proteins that surrounds the polypeptide exit tunnel on the outside of the ribosome. Forms the main docking site for trigger factor binding to the ribosome. The protein is Large ribosomal subunit protein uL23 of Brucella abortus (strain S19).